The following is a 542-amino-acid chain: CTP synthase (542 aa).

Residues 1-265 (MARYIFITGG…DQEVLAAFGI (265 aa)) form an amidoligase domain region. Serine 13 contacts CTP. Residue serine 13 coordinates UTP. 14–19 (SLGKGL) lines the ATP pocket. Tyrosine 54 lines the L-glutamine pocket. Aspartate 71 serves as a coordination point for ATP. The Mg(2+) site is built by aspartate 71 and glutamate 139. CTP-binding positions include 146–148 (DIE), 186–191 (KTKPTQ), and lysine 222. Residues 186-191 (KTKPTQ) and lysine 222 each bind UTP. 238–240 (RDV) is an ATP binding site. Residues 291-541 (TIAIVGKYTG…IAAALEQSRL (251 aa)) form the Glutamine amidotransferase type-1 domain. Glycine 353 lines the L-glutamine pocket. Residue cysteine 380 is the Nucleophile; for glutamine hydrolysis of the active site. Residues 381–384 (FGMQ), glutamate 404, and arginine 469 contribute to the L-glutamine site. Catalysis depends on residues histidine 514 and glutamate 516.

The protein belongs to the CTP synthase family. Homotetramer.

It carries out the reaction UTP + L-glutamine + ATP + H2O = CTP + L-glutamate + ADP + phosphate + 2 H(+). The enzyme catalyses L-glutamine + H2O = L-glutamate + NH4(+). It catalyses the reaction UTP + NH4(+) + ATP = CTP + ADP + phosphate + 2 H(+). Its pathway is pyrimidine metabolism; CTP biosynthesis via de novo pathway; CTP from UDP: step 2/2. Allosterically activated by GTP, when glutamine is the substrate; GTP has no effect on the reaction when ammonia is the substrate. The allosteric effector GTP functions by stabilizing the protein conformation that binds the tetrahedral intermediate(s) formed during glutamine hydrolysis. Inhibited by the product CTP, via allosteric rather than competitive inhibition. Functionally, catalyzes the ATP-dependent amination of UTP to CTP with either L-glutamine or ammonia as the source of nitrogen. Regulates intracellular CTP levels through interactions with the four ribonucleotide triphosphates. The sequence is that of CTP synthase from Methylocella silvestris (strain DSM 15510 / CIP 108128 / LMG 27833 / NCIMB 13906 / BL2).